Reading from the N-terminus, the 116-residue chain is Large ribosomal subunit protein uL14m (116 aa).

This sequence belongs to the universal ribosomal protein uL14 family.

It localises to the mitochondrion. The chain is Large ribosomal subunit protein uL14m (RPL14) from Acanthamoeba polyphaga (Amoeba).